Reading from the N-terminus, the 537-residue chain is ATP synthase subunit alpha (537 aa).

Residue 171 to 178 (GDRQTGKT) participates in ATP binding.

This sequence belongs to the ATPase alpha/beta chains family. As to quaternary structure, F-type ATPases have 2 components, CF(1) - the catalytic core - and CF(0) - the membrane proton channel. CF(1) has five subunits: alpha(3), beta(3), gamma(1), delta(1), epsilon(1). CF(0) has four main subunits: a, b, b' and c.

The protein localises to the cell inner membrane. The enzyme catalyses ATP + H2O + 4 H(+)(in) = ADP + phosphate + 5 H(+)(out). Its function is as follows. Produces ATP from ADP in the presence of a proton gradient across the membrane. The alpha chain is a regulatory subunit. This chain is ATP synthase subunit alpha, found in Chloroherpeton thalassium (strain ATCC 35110 / GB-78).